We begin with the raw amino-acid sequence, 512 residues long: Cytochrome P450 84A4 (512 aa).

The chain crosses the membrane as a helical span at residues 7–24 (LIVLVPLLLFLFPHLLLR). C447 provides a ligand contact to heme.

The protein belongs to the cytochrome P450 family. The cofactor is heme. In terms of tissue distribution, expressed in seedlings, roots, stems and inflorescence nodes. Low or no expression in leaves, flowers, seeds and lignifying tissue.

The protein localises to the membrane. Its function is as follows. Cytochrome P450 involved in the production of catechol-substituted substrates needed for the arabidopyrones biosynthesis. Converts p-coumaraldehyde into caffealdehyde. This Arabidopsis thaliana (Mouse-ear cress) protein is Cytochrome P450 84A4 (CYP84A4).